The primary structure comprises 506 residues: Glucan endo-1,3-beta-glucosidase 13 (506 aa).

Residues 1–22 (MARDFKLIFSISILLLLLDCCY) form the signal peptide. The N-linked (GlcNAc...) asparagine glycan is linked to N70. Catalysis depends on E119, which acts as the Proton donor. Residues N127, N175, and N212 are each glycosylated (N-linked (GlcNAc...) asparagine). The Nucleophile role is filled by E264. 2 N-linked (GlcNAc...) asparagine glycosylation sites follow: N356 and N361. Cysteines 370 and 433 form a disulfide. N-linked (GlcNAc...) asparagine glycans are attached at residues N459 and N465. A lipid anchor (GPI-anchor amidated serine) is attached at S471. A propeptide spans 472–506 (SASTPRGNELLQWILKLCLMISLFFSLQTMNSQAL) (removed in mature form).

The protein belongs to the glycosyl hydrolase 17 family. Contains two additional disulfide bonds.

It localises to the secreted. The protein localises to the cell wall. Its subcellular location is the cell membrane. It carries out the reaction Hydrolysis of (1-&gt;3)-beta-D-glucosidic linkages in (1-&gt;3)-beta-D-glucans.. This Arabidopsis thaliana (Mouse-ear cress) protein is Glucan endo-1,3-beta-glucosidase 13.